The sequence spans 166 residues: 16S rRNA aminocarboxypropyltransferase (166 aa).

Residues Thr-17, Ile-62, Leu-84, Tyr-99, and Ser-103 each coordinate S-adenosyl-L-methionine.

The protein belongs to the TDD superfamily. TSR3 family.

It is found in the cytoplasm. The catalysed reaction is an N(1)-methylpseudouridine in rRNA + S-adenosyl-L-methionine = N(1)-methyl-N(3)-[(3S)-3-amino-3-carboxypropyl]pseudouridine in rRNA + S-methyl-5'-thioadenosine + H(+). In terms of biological role, aminocarboxypropyltransferase that catalyzes the aminocarboxypropyl transfer on pseudouridine corresponding to position 914 in M.jannaschii 16S rRNA. It constitutes the last step in biosynthesis of the hypermodified N1-methyl-N3-(3-amino-3-carboxypropyl) pseudouridine (m1acp3-Psi). In Saccharolobus islandicus (strain Y.N.15.51 / Yellowstone #2) (Sulfolobus islandicus), this protein is 16S rRNA aminocarboxypropyltransferase.